A 210-amino-acid polypeptide reads, in one-letter code: Fimbriae Z protein (210 aa).

Positions 5-121 (SVIIMDEHPI…DIYNAVKMIL (117 aa)) constitute a Response regulatory domain. Position 56 is a 4-aspartylphosphate (aspartate 56). The 66-residue stretch at 143-208 (GGHHDMPLSN…ELIDYAKSHE (66 aa)) folds into the HTH luxR-type domain. A DNA-binding region (H-T-H motif) is located at residues 167–186 (NKEIAEQLLLSNKTISAHKA).

It is found in the cytoplasm. In Salmonella typhimurium (strain LT2 / SGSC1412 / ATCC 700720), this protein is Fimbriae Z protein (fimZ).